The sequence spans 366 residues: Galactoside alpha-(1,2)-fucosyltransferase 1 (366 aa).

Over 1–8 the chain is Cytoplasmic; that stretch reads MWPRSHRH. Residues 9–25 form a helical; Signal-anchor for type II membrane protein membrane-spanning segment; sequence LCLAFLLVCVLSAISFL. Over 26–366 the chain is Lumenal; it reads IHFHQDSIRH…LSPLWPLAEP (341 aa). 3 N-linked (GlcNAc...) asparagine glycosylation sites follow: Asn66, Asn302, and Asn328.

It belongs to the glycosyltransferase 11 family.

Its subcellular location is the golgi apparatus. It localises to the golgi stack membrane. It carries out the reaction a beta-D-galactosyl-(1-&gt;4)-N-acetyl-beta-D-glucosaminyl derivative + GDP-beta-L-fucose = an alpha-L-Fuc-(1-&gt;2)-beta-D-Gal-(1-&gt;4)-beta-D-GlcNAc derivative + GDP + H(+). It catalyses the reaction a ganglioside GA1 + GDP-beta-L-fucose = a ganglioside Fuc-GA1 + GDP + H(+). The catalysed reaction is a beta-D-Gal-(1-&gt;3)-beta-D-GlcNAc-(1-&gt;3)-beta-D-Gal-(1-&gt;4)-beta-D-Glc-(1&lt;-&gt;1')-Cer(d18:1(4E)) + GDP-beta-L-fucose = alpha-L-fucosyl-(1-&gt;2)- beta-D-galactosyl-(1-&gt;3)-N-acetyl-beta-D-glucosaminyl-(1-&gt;3)-beta-D-galactosyl-(1-&gt;4)-beta-D-glucosyl-(1&lt;-&gt;1')-N-acylsphing-4-enine + GDP + H(+). The enzyme catalyses a neolactoside nLc4Cer(d18:1(4E)) + GDP-beta-L-fucose = a neolactoside IV(2)-alpha-Fuc-nLc4Cer(d18:1(4E)) + GDP + H(+). It carries out the reaction a ganglioside GM1 + GDP-beta-L-fucose = a ganglioside Fuc-GM1 + GDP + H(+). It catalyses the reaction beta-D-galactosyl-(1-&gt;3)-N-acetyl-D-galactosamine + GDP-beta-L-fucose = alpha-L-fucosyl-(1-&gt;2)-beta-D-galactosyl-(1-&gt;3)-N-acetyl-D-galactosamine + GDP + H(+). It participates in protein modification; protein glycosylation. Catalyzes the transfer of L-fucose, from a guanosine diphosphate-beta-L-fucose, to the terminal galactose residue of glycoconjugates through an alpha(1,2) linkage leading to H antigen synthesis that is an intermediate substrate in the synthesis of ABO blood group antigens. H antigen is essential for maturation of the glomerular layer of the main olfactory bulb, in cell migration and early cell-cell contacts during tumor associated angiogenesis. Preferentially fucosylates soluble lactose and to a lesser extent fucosylates glycolipids gangliosides GA1 and GM1a. This is Galactoside alpha-(1,2)-fucosyltransferase 1 from Saimiri boliviensis boliviensis (Bolivian squirrel monkey).